A 93-amino-acid polypeptide reads, in one-letter code: DNA-binding protein HB1 (93 aa).

It belongs to the bacterial histone-like protein family. In terms of assembly, homodimer.

In terms of biological role, histone-like DNA-binding protein which is capable of wrapping DNA to stabilize it, and thus to prevent its denaturation under extreme environmental conditions. The protein is DNA-binding protein HB1 (hup) of Bifidobacterium longum (strain NCC 2705).